A 321-amino-acid chain; its full sequence is MKTTFLDFEQPIAELEEKIEQLRFVQDDSAVDISEEIARLEVKSQALTKDLYAKLTPWQIAQVARHPQRPYTLDYVQHIFTDFEELHGDRAYADDKAIVGGLARFNGQSCVIIGHQKGRDTKEKIARNFGMPRPEGYRKAMRLMKLAEKFGLPVFTFVDTPGAYPGIGAEERGQSEAIGHNLYVMAELKVPLICTVIGEGGSGGALAIAVGDQVMMMQYSTYSVISPEGCASILWKSAEKASEAAETMGITAARLKSLGLVDKVVNEPVGGAHRDHRAAAQSLKRALAEALRQVDTLSPSELVEQRMEKLMGYGRFKEIAA.

Positions 39–293 constitute a CoA carboxyltransferase C-terminal domain; sequence RLEVKSQALT…KRALAEALRQ (255 aa).

The protein belongs to the AccA family. In terms of assembly, acetyl-CoA carboxylase is a heterohexamer composed of biotin carboxyl carrier protein (AccB), biotin carboxylase (AccC) and two subunits each of ACCase subunit alpha (AccA) and ACCase subunit beta (AccD).

Its subcellular location is the cytoplasm. The catalysed reaction is N(6)-carboxybiotinyl-L-lysyl-[protein] + acetyl-CoA = N(6)-biotinyl-L-lysyl-[protein] + malonyl-CoA. It participates in lipid metabolism; malonyl-CoA biosynthesis; malonyl-CoA from acetyl-CoA: step 1/1. Component of the acetyl coenzyme A carboxylase (ACC) complex. First, biotin carboxylase catalyzes the carboxylation of biotin on its carrier protein (BCCP) and then the CO(2) group is transferred by the carboxyltransferase to acetyl-CoA to form malonyl-CoA. This Azoarcus sp. (strain BH72) protein is Acetyl-coenzyme A carboxylase carboxyl transferase subunit alpha.